The primary structure comprises 138 residues: uncharacterized protein (138 aa).

2 disordered regions span residues 1-23 and 35-83; these read MPES…MLSE and ASPS…EDPV. The span at 60–69 shows a compositional bias: acidic residues; it reads DEETIPEEDD.

This is an uncharacterized protein from Schizosaccharomyces pombe (strain 972 / ATCC 24843) (Fission yeast).